A 128-amino-acid polypeptide reads, in one-letter code: UPF0102 protein Rfer_3873 (128 aa).

Polar residues predominate over residues 1–15; that stretch reads MAIPQIKTQVGTSKQ. The tract at residues 1-20 is disordered; the sequence is MAIPQIKTQVGTSKQAGDAA.

It belongs to the UPF0102 family.

The sequence is that of UPF0102 protein Rfer_3873 from Albidiferax ferrireducens (strain ATCC BAA-621 / DSM 15236 / T118) (Rhodoferax ferrireducens).